The chain runs to 554 residues: CTP synthase (554 aa).

Positions M1–L265 are amidoligase domain. S13 serves as a coordination point for CTP. S13 contacts UTP. Residues S14–I19 and D71 contribute to the ATP site. Mg(2+) is bound by residues D71 and E139. CTP-binding positions include D146–E148, K186–Q191, and K222. Residues K186–Q191 and K222 each bind UTP. Residues T292–G545 form the Glutamine amidotransferase type-1 domain. L-glutamine is bound at residue G353. C380 serves as the catalytic Nucleophile; for glutamine hydrolysis. Residues Y381 to Q384, E404, and R471 each bind L-glutamine. Catalysis depends on residues H518 and E520.

This sequence belongs to the CTP synthase family. In terms of assembly, homotetramer.

It catalyses the reaction UTP + L-glutamine + ATP + H2O = CTP + L-glutamate + ADP + phosphate + 2 H(+). The catalysed reaction is L-glutamine + H2O = L-glutamate + NH4(+). The enzyme catalyses UTP + NH4(+) + ATP = CTP + ADP + phosphate + 2 H(+). It functions in the pathway pyrimidine metabolism; CTP biosynthesis via de novo pathway; CTP from UDP: step 2/2. With respect to regulation, allosterically activated by GTP, when glutamine is the substrate; GTP has no effect on the reaction when ammonia is the substrate. The allosteric effector GTP functions by stabilizing the protein conformation that binds the tetrahedral intermediate(s) formed during glutamine hydrolysis. Inhibited by the product CTP, via allosteric rather than competitive inhibition. Catalyzes the ATP-dependent amination of UTP to CTP with either L-glutamine or ammonia as the source of nitrogen. Regulates intracellular CTP levels through interactions with the four ribonucleotide triphosphates. The chain is CTP synthase from Xylella fastidiosa (strain M12).